The chain runs to 141 residues: ATP synthase F(0) complex subunit C2, mitochondrial (141 aa).

The N-terminal 66 residues, 1-66 (MFSCFKFIST…RNFQTSAISR (66 aa)), are a transit peptide targeting the mitochondrion. A helical membrane pass occupies residues 82–102 (VGVAGSGAGIGTVFGSLIIGY). The residue at position 109 (Lys109) is an N6,N6,N6-trimethyllysine. A helical membrane pass occupies residues 117–137 (ILGFALSEAMGLFCLMVAFLI).

It belongs to the ATPase C chain family. In terms of assembly, F-type ATPases have 2 components, CF(1) - the catalytic core - and CF(0) - the membrane proton channel. CF(1) has five subunits: alpha(3), beta(3), gamma(1), delta(1), epsilon(1). CF(0) has three main subunits: a, b and c. Interacts with DNAJC30; interaction is direct. In terms of processing, trimethylated by ATPSCKMT at Lys-109. Methylation is required for proper incorporation of the C subunit into the ATP synthase complex and mitochondrial respiration.

It is found in the mitochondrion membrane. Mitochondrial membrane ATP synthase (F(1)F(0) ATP synthase or Complex V) produces ATP from ADP in the presence of a proton gradient across the membrane which is generated by electron transport complexes of the respiratory chain. F-type ATPases consist of two structural domains, F(1) - containing the extramembraneous catalytic core and F(0) - containing the membrane proton channel, linked together by a central stalk and a peripheral stalk. During catalysis, ATP synthesis in the catalytic domain of F(1) is coupled via a rotary mechanism of the central stalk subunits to proton translocation. Part of the complex F(0) domain. A homomeric c-ring of probably 10 subunits is part of the complex rotary element. This Pongo abelii (Sumatran orangutan) protein is ATP synthase F(0) complex subunit C2, mitochondrial.